Consider the following 904-residue polypeptide: DNA mismatch repair protein MutS (904 aa).

655 to 662 (GPNMGGKS) provides a ligand contact to ATP.

This sequence belongs to the DNA mismatch repair MutS family.

Its function is as follows. This protein is involved in the repair of mismatches in DNA. It is possible that it carries out the mismatch recognition step. This protein has a weak ATPase activity. This chain is DNA mismatch repair protein MutS, found in Rhizorhabdus wittichii (strain DSM 6014 / CCUG 31198 / JCM 15750 / NBRC 105917 / EY 4224 / RW1) (Sphingomonas wittichii).